We begin with the raw amino-acid sequence, 498 residues long: Probable malate:quinone oxidoreductase 2 (498 aa).

The protein belongs to the MQO family. FAD is required as a cofactor.

The enzyme catalyses (S)-malate + a quinone = a quinol + oxaloacetate. The protein operates within carbohydrate metabolism; tricarboxylic acid cycle; oxaloacetate from (S)-malate (quinone route): step 1/1. The protein is Probable malate:quinone oxidoreductase 2 of Staphylococcus aureus (strain COL).